We begin with the raw amino-acid sequence, 208 residues long: Thymidylate kinase (208 aa).

Residue 10 to 17 (GPEGSGKT) participates in ATP binding.

It belongs to the thymidylate kinase family.

The enzyme catalyses dTMP + ATP = dTDP + ADP. Functionally, phosphorylation of dTMP to form dTDP in both de novo and salvage pathways of dTTP synthesis. The polypeptide is Thymidylate kinase (Bacillus cereus (strain 03BB102)).